The chain runs to 822 residues: Pentatricopeptide repeat-containing protein At2g18940, chloroplastic (822 aa).

The disordered stretch occupies residues methionine 1–serine 42. Residues methionine 1–glutamate 77 constitute a chloroplast transit peptide. Residues histidine 8–serine 22 show a composition bias toward pro residues. Positions glutamine 23 to histidine 37 are enriched in low complexity. PPR repeat units lie at residues aspartate 209–proline 243, threonine 244–phenylalanine 279, aspartate 280–proline 314, glycine 315–alanine 349, aspartate 350–proline 384, asparagine 385–proline 419, asparagine 420–proline 454, asparagine 455–proline 489, aspartate 490–alanine 524, cysteine 525–proline 559, threonine 560–proline 594, serine 595–proline 629, aspartate 630–proline 664, aspartate 665–proline 699, aspartate 700–proline 734, cysteine 735–proline 769, and asparagine 770–phenylalanine 800.

This sequence belongs to the PPR family. P subfamily.

Its subcellular location is the plastid. It is found in the chloroplast. The sequence is that of Pentatricopeptide repeat-containing protein At2g18940, chloroplastic from Arabidopsis thaliana (Mouse-ear cress).